The following is a 428-amino-acid chain: MKTLFVLFILILCVFAINANQQEEINQESTQQTHQNLLYKVQKWRTSLKDSSDAELKLSPALVVAGVLCFTAALISSASGIGDGFFFIPIMNLVAGIDLKAASSFSAFMVTGGSIANLINNHFGCKKLIDYDLALLLEPCMLLGVSVGVICNKVFPEWLITGLFVVFLMWSSMETCENGHTSWKLSLILREKEDMRDSRLAEVKRRRTIIFFKHLYLKIKKTETKQSFLGRNLGIISIKPCSVEYWILLSLQIPLALVFTILALSRTESLQEQSISNQEGTRLDHQFKRLMFPVMSFLAGLLGGIFGIGGGMIISPLLLRAGIPPQVTAATTSFMVFFSATMSGVQYLLLGMQNTEAAYVFSVICFFASTLGLVFAQKVVPHFRRASIIVFLVGTMMYLTTIVMASFGILVFYIDNDAGKDIGFQLPC.

Transmembrane regions (helical) follow at residues 1–21 (MKTL…NANQ), 61–81 (ALVV…ASGI), 82–102 (GDGF…LKAA), 105–125 (FSAF…HFGC), 128–148 (LIDY…VSVG), 149–169 (VICN…VFLM), 245–265 (YWIL…LALS), 294–314 (VMSF…GMII), 332–352 (TSFM…LLGM), 356–376 (EAAY…LVFA), and 388–408 (IIVF…ASFG).

It belongs to the 4-toluene sulfonate uptake permease (TSUP) (TC 2.A.102) family.

It localises to the membrane. This is Sulfite exporter TauE/SafE family protein 6 from Arabidopsis thaliana (Mouse-ear cress).